The chain runs to 96 residues: Muconolactone Delta-isomerase (96 aa).

This sequence belongs to the muconolactone Delta-isomerase family. Homodecamer.

The enzyme catalyses (S)-muconolactone = (4,5-dihydro-5-oxofuran-2-yl)-acetate. Its pathway is aromatic compound metabolism; beta-ketoadipate pathway; 5-oxo-4,5-dihydro-2-furylacetate from catechol: step 3/3. In Pseudomonas aeruginosa (strain ATCC 15692 / DSM 22644 / CIP 104116 / JCM 14847 / LMG 12228 / 1C / PRS 101 / PAO1), this protein is Muconolactone Delta-isomerase (catC).